The chain runs to 280 residues: Shikimate kinase (280 aa).

74 to 84 is an ATP binding site; sequence PGGSGLGSSSA.

This sequence belongs to the GHMP kinase family. Archaeal shikimate kinase subfamily.

It is found in the cytoplasm. The catalysed reaction is shikimate + ATP = 3-phosphoshikimate + ADP + H(+). It participates in metabolic intermediate biosynthesis; chorismate biosynthesis; chorismate from D-erythrose 4-phosphate and phosphoenolpyruvate: step 5/7. The polypeptide is Shikimate kinase (aroK) (Archaeoglobus fulgidus (strain ATCC 49558 / DSM 4304 / JCM 9628 / NBRC 100126 / VC-16)).